We begin with the raw amino-acid sequence, 220 residues long: 7-cyano-7-deazaguanine synthase (220 aa).

10–20 (FSGGQDSTTCL) lines the ATP pocket. Zn(2+) is bound by residues Cys-188, Cys-197, Cys-200, and Cys-203.

The protein belongs to the QueC family. It depends on Zn(2+) as a cofactor.

It catalyses the reaction 7-carboxy-7-deazaguanine + NH4(+) + ATP = 7-cyano-7-deazaguanine + ADP + phosphate + H2O + H(+). Its pathway is purine metabolism; 7-cyano-7-deazaguanine biosynthesis. Its function is as follows. Catalyzes the ATP-dependent conversion of 7-carboxy-7-deazaguanine (CDG) to 7-cyano-7-deazaguanine (preQ(0)). This is 7-cyano-7-deazaguanine synthase from Neisseria meningitidis serogroup C (strain 053442).